The primary structure comprises 349 residues: AA9 family lytic polysaccharide monooxygenase C (349 aa).

An N-terminal signal peptide occupies residues 1-19 (MKSTFGLLALAAAAKLVSA). Histidine 20 and histidine 102 together coordinate Cu(2+). A disulfide bridge connects residues cysteine 62 and cysteine 183. Histidine 169 serves as a coordination point for O2. Tyrosine 180 lines the Cu(2+) pocket. The tract at residues 233 to 304 (DGSSSGSSGS…SGSNSGSDSC (72 aa)) is disordered. Composition is skewed to low complexity over residues 234 to 262 (GSSS…AAPT) and 269 to 304 (TSAT…SDSC). One can recognise a CBM1 domain in the interval 311–347 (GSVKIYGQCGGQNYSGPTSCEAGLICKEWNPYYHQCV). 2 disulfide bridges follow: cysteine 319-cysteine 336 and cysteine 330-cysteine 346. Residue asparagine 323 is glycosylated (N-linked (GlcNAc...) asparagine).

The protein belongs to the polysaccharide monooxygenase AA9 family. It depends on Cu(2+) as a cofactor.

Its subcellular location is the secreted. The catalysed reaction is [(1-&gt;4)-beta-D-glucosyl]n+m + reduced acceptor + O2 = 4-dehydro-beta-D-glucosyl-[(1-&gt;4)-beta-D-glucosyl]n-1 + [(1-&gt;4)-beta-D-glucosyl]m + acceptor + H2O.. Lytic polysaccharide monooxygenase (LPMO) that depolymerizes crystalline and amorphous polysaccharides via the oxidation of scissile alpha- or beta-(1-4)-glycosidic bonds, yielding C4 oxidation products. Catalysis by LPMOs requires the reduction of the active-site copper from Cu(II) to Cu(I) by a reducing agent and H(2)O(2) or O(2) as a cosubstrate. Active on cellulose and cello-oligosaccharides, as well as plant cell wall-derived hemicellulosic polysaccharides. Also active on cello-oligosaccharides such as cellohexaose, cellopentaose or cellotetraose. This is AA9 family lytic polysaccharide monooxygenase C from Aspergillus fumigatus (strain ATCC MYA-4609 / CBS 101355 / FGSC A1100 / Af293) (Neosartorya fumigata).